Consider the following 330-residue polypeptide: L-lactate dehydrogenase (330 aa).

Residues V31, D52, K57, and 96 to 97 contribute to the NAD(+) site; that span reads GA. Residues Q99, R105, and 137 to 140 each bind substrate; that span reads NPVD. NAD(+) contacts are provided by residues 135-137 and S160; that span reads VSN. A substrate-binding site is contributed by 165–168; it reads DTAR. Positions 170 and 185 each coordinate beta-D-fructose 1,6-bisphosphate. H192 (proton acceptor) is an active-site residue. Y238 is subject to Phosphotyrosine. T247 lines the substrate pocket.

Belongs to the LDH/MDH superfamily. LDH family. As to quaternary structure, homotetramer.

The protein localises to the cytoplasm. The enzyme catalyses (S)-lactate + NAD(+) = pyruvate + NADH + H(+). The protein operates within fermentation; pyruvate fermentation to lactate; (S)-lactate from pyruvate: step 1/1. With respect to regulation, allosterically activated by fructose 1,6-bisphosphate (FBP). In terms of biological role, catalyzes the conversion of lactate to pyruvate. The sequence is that of L-lactate dehydrogenase from Gloeobacter violaceus (strain ATCC 29082 / PCC 7421).